The sequence spans 612 residues: Kelch-like protein 40a (612 aa).

Residues 34 to 101 form the BTB domain; it reads VDCILKIKDK…IYTSDINLTE (68 aa). Residues 136–238 form the BACK domain; the sequence is CLAIFRLGLL…PTSYFKEKVE (103 aa). The segment covering 266-275 has biased composition (basic residues); that stretch reads RVKRSSHRKE. The segment at 266-290 is disordered; sequence RVKRSSHRKEGKSAEFESDDDDEDG. The segment covering 281 to 290 has biased composition (acidic residues); the sequence is FESDDDDEDG. Kelch repeat units follow at residues 350 to 402, 403 to 452, 453 to 500, 502 to 547, and 549 to 604; these read QIFV…EAEN, SIYV…SHKG, LVYV…VHKN, IYVV…ELGG, and LYAI…GVRL.

The protein belongs to the KLHL40 family. Component of the BCR(KLHL40) E3 ubiquitin ligase complex. In terms of tissue distribution, expressed in skeletal muscle and heart. Detected, although at much lower levels, in brain, eye and fin.

Its subcellular location is the cytoplasm. It is found in the myofibril. The protein resides in the sarcomere. The protein localises to the a band. It localises to the i band. Its function is as follows. Substrate-specific adapter of a BCR (BTB-CUL3-RBX1) E3 ubiquitin ligase complex. Required for skeletal muscle development. The polypeptide is Kelch-like protein 40a (klhl40a) (Danio rerio (Zebrafish)).